The sequence spans 207 residues: MENEDGYMTLSFKNRCKSKQKSKDFSLYPQYYCLLLIFGCIVILIFIMTGIDLKFWHKKMDFSQNVNVSSLSGHNYLCPNDWLLNEGKCYWFSTSFKTWKESQRDCTQLQAHLLVIQNLDELEFIQNSLKPGHFGWIGLYVTFQGNLWMWIDEHFLVPELFSVIGPTDDRSCAVITGNWVYSEDCSSTFKGICQRDAILTHNGTSGV.

The Cytoplasmic portion of the chain corresponds to M1–Q30. Y7 carries the post-translational modification Phosphotyrosine. Residues Y31–I51 form a helical; Signal-anchor for type II membrane protein membrane-spanning segment. Topologically, residues D52–V207 are extracellular. N-linked (GlcNAc...) asparagine glycosylation occurs at N67. Intrachain disulfides connect C78-C89, C106-C193, and C172-C185. Residues N85–Q194 enclose the C-type lectin domain. Residue N202 is glycosylated (N-linked (GlcNAc...) asparagine).

As to quaternary structure, homodimer; non-disulfide-linked. Interacts with CLEC2A. N-glycosylated.

It is found in the cell membrane. In terms of biological role, C-type lectin-like receptor involved in natural killer cell mediated cytotoxicity and cytokine secretion in keratinocytes via its interaction with CLEC2A. Triggers degranulation in a SYK-dependent manner and stimulates SYK phosphotyrosinylation without recruiting SYK directly. The chain is Killer cell lectin-like receptor subfamily F member 2 (KLRF2) from Homo sapiens (Human).